The sequence spans 67 residues: Large ribosomal subunit protein uL29 (67 aa).

Belongs to the universal ribosomal protein uL29 family.

The protein is Large ribosomal subunit protein uL29 of Desulfitobacterium hafniense (strain DSM 10664 / DCB-2).